Here is a 132-residue protein sequence, read N- to C-terminus: UPF0357 protein YCL012C (132 aa).

The first 25 residues, Met1–Arg25, serve as a signal peptide directing secretion.

The protein belongs to the UPF0357 family.

This Saccharomyces bayanus (Yeast) protein is UPF0357 protein YCL012C (YCL012C).